The chain runs to 316 residues: Serpentine receptor class gamma-8 (316 aa).

The next 7 membrane-spanning stretches (helical) occupy residues phenylalanine 28 to valine 48, proline 60 to threonine 80, leucine 106 to threonine 126, phenylalanine 147 to isoleucine 167, isoleucine 186 to isoleucine 206, alanine 235 to leucine 255, and leucine 267 to alanine 287.

The protein belongs to the nematode receptor-like protein srg family.

The protein resides in the membrane. This chain is Serpentine receptor class gamma-8 (srg-8), found in Caenorhabditis elegans.